Reading from the N-terminus, the 605-residue chain is uncharacterized protein (605 aa).

The segment at 111-151 is disordered; sequence VNVNDGKPNDIELSSTSKTENDPPLSLHTTPDDLQGNGVNV.

It localises to the golgi apparatus. This is an uncharacterized protein from Schizosaccharomyces pombe (strain 972 / ATCC 24843) (Fission yeast).